A 414-amino-acid chain; its full sequence is Serine hydroxymethyltransferase (414 aa).

Residues Leu-116 and 120-122 (GHL) contribute to the (6S)-5,6,7,8-tetrahydrofolate site. Lys-225 is modified (N6-(pyridoxal phosphate)lysine). 349-351 (SPF) lines the (6S)-5,6,7,8-tetrahydrofolate pocket.

Belongs to the SHMT family. Homodimer. Pyridoxal 5'-phosphate is required as a cofactor.

It localises to the cytoplasm. It carries out the reaction (6R)-5,10-methylene-5,6,7,8-tetrahydrofolate + glycine + H2O = (6S)-5,6,7,8-tetrahydrofolate + L-serine. It participates in one-carbon metabolism; tetrahydrofolate interconversion. Its pathway is amino-acid biosynthesis; glycine biosynthesis; glycine from L-serine: step 1/1. Functionally, catalyzes the reversible interconversion of serine and glycine with tetrahydrofolate (THF) serving as the one-carbon carrier. This reaction serves as the major source of one-carbon groups required for the biosynthesis of purines, thymidylate, methionine, and other important biomolecules. Also exhibits THF-independent aldolase activity toward beta-hydroxyamino acids, producing glycine and aldehydes, via a retro-aldol mechanism. The chain is Serine hydroxymethyltransferase from Oenococcus oeni (strain ATCC BAA-331 / PSU-1).